Here is a 176-residue protein sequence, read N- to C-terminus: MAASTDIAGLEESFRKFAIHGDPKASGQEMNGKNWAKLCKDCKVADGKAVTGTDVDIVFSKVKAKSARVINYEEFKKALEELATKRFKGKSKEEAFDAICQLIAGKEPANIGVTKAKTGGAVDRLTDTSKYTGSHKERFDESGKGKGIAGRQDILDDSGYVSAYKNAGTYDAKVKK.

The residue at position 2 (Ala2) is an N-acetylalanine. A disordered region spans residues 132–152; that stretch reads TGSHKERFDESGKGKGIAGRQ. The segment covering 134 to 144 has biased composition (basic and acidic residues); the sequence is SHKERFDESGK.

It belongs to the TPPP family.

The protein resides in the cytoplasm. Its subcellular location is the cytoskeleton. Functionally, regulator of microtubule dynamic that has microtubule bundling activity. Required for embryo implantation; possibly by regulating beta-catenin. Also required for decidualization via regulation of beta-catenin. The polypeptide is Tubulin polymerization-promoting protein family member 3 (Mus musculus (Mouse)).